A 692-amino-acid chain; its full sequence is Formate hydrogenlyase transcriptional activator (692 aa).

The 143-residue stretch at 202 to 344 folds into the GAF domain; the sequence is DIDELVSEVA…QIAERVAIAV (143 aa). The region spanning 381–610 is the Sigma-54 factor interaction domain; sequence IIGRSEAMYN…LENVVERAVL (230 aa). Residues 409–416 and 472–481 each bind ATP; these read GETGTGKE and ADKSSLFLDE. The segment at residues 663-682 is a DNA-binding region (H-T-H motif); the sequence is PKGAAQRLGLKRTTLLSRMK.

Its function is as follows. Required for induction of expression of the formate dehydrogenase H and hydrogenase-3 structural genes. This chain is Formate hydrogenlyase transcriptional activator (fhlA), found in Salmonella typhimurium (strain LT2 / SGSC1412 / ATCC 700720).